The sequence spans 1343 residues: MNLGDATTRPPVGRRMKAQAPPPPRPPQPAPRRIFRNAVPDGGGSSGGDCKENMLRSYVDLHISLPTGYQTTINVDGRKALMDLLVDLCSQYHLNPAYHTLELLSPDAQPVSFKPNALLGALDVSCALIKERVLEDRVIRKPPPKVPEKTVRLVVNYHRSQKAVVRVNPLAPLQTLVPVICQKCEFDPAHVLLFKDNINHQQLDLDKSLSDLGIRELYVLDQTLVLQPKMASTPALNYSAESLRSNSLSGSEKKGLLGFLKFNRRKSKGMSVVASGPCVEARPSTLGQSQSVMNISKMSPKVELKKRRAPAPPPAPTQTLPPTSQISLGSPSSHNLLKKRKAPAPPPTPPPSTPEPDISTYVPTATVQEHYIPASVERTPRASTPADDSDLSHSIEDSEPARSICSSSSGDDAAAVGSSSSSLAEEPVTHRADVIAPFTTSTPEPEPKPEYEPELKKEASPRSTPELEPGPRPEVPAAEDLEVEMELKMEETENNRHSGIAWLHSAHESVLERRVQQEVETVSVASSESFADHGYAASEDMAEESGPVSPSERMQSVSPMDIMSLNSDSTLPVKQSKESSSDSDEGCATWGSRQSSGHIQDGQKSIKRQNGYEEDPEITAQIHLTLADLDANLADLNHSDGASVFVDDEIPVSIVDMDIPVTAIDEVLDDDQCSASECESVLLRSTQSISSKPCTPCGVIQNKNNNACLTEEKHRSPFPDIEKQLQTATLTVIDKPTIQSPTSKKPSQDAKITDNMEQKTTFNSEAKSKSETVELTSQKDTVLQKSQSFVRPDVQSVQKERTSSTRVLPTQGKITLSSFSRFGMKTFTVIPPKPAVSQTKPAGSLVTGAIKIDEQGNMVTQRQISSGPEKNNTPSVDTTRADKTPLVKAKAFWSTTEKQEKLTTAKTEPIVNNGDTDVFKASAVTGSFKLSPPEETHKEVIIVERKPISGVASKPSFSENHAEKRDLSFLIPSRRTSSQYVASVIAKNNKNSSIPKTKIDTTPAPLSISGVQNPVNQLLNNEVKPTSIHKPAVTVKPTENPVPSFRPKCLQSYVAEKPTSSERISTLHGGDKTKSLDSQPLSIKIQPFPHVSAHIKSFSEEATSINNFPDTSSARQTPTDTTHPPLAKKPELHKSEIPSEPNQGNVFGPVKKFKPVIFKPVQQETSIHSSLMEAIQSGEGIERLRKVSDLPTSCTVKKPSYNDPENERSALLSAIRASSTSAKLKKTKSVASKELEQLRKVEEDRNVHTEVISPRPTSPDFVPPLPPSFSPPPPPPPPLAPAKPPVVLPPGGNPEAAREALLEAIRSGSGAQQLRKVPVTQTRRQVNGRLGTIQATSPLSYGH.

Disordered regions lie at residues 1–51 (MNLG…GDCK), 301–479 (KVEL…PAAE), 522–613 (VSVA…NGYE), 733–808 (IDKP…TRVL), 1056–1077 (EKPTSSERISTLHGGDKTKSLD), and 1105–1148 (INNF…NVFG). A compositionally biased stretch (pro residues) spans 20–30 (APPPPRPPQPA). A KKRRAP 1 motif is present at residues 305-310 (KKRRAP). Positions 324–335 (SQISLGSPSSHN) are enriched in polar residues. Residues 338-343 (KKRKAP) carry the KKRRAP 2 motif. Residues 343–354 (PAPPPTPPPSTP) show a composition bias toward pro residues. Residues 390-400 (DLSHSIEDSEP) are compositionally biased toward basic and acidic residues. Low complexity predominate over residues 406-422 (SSSSGDDAAAVGSSSSS). Positions 445-460 (PEPKPEYEPELKKEAS) are enriched in basic and acidic residues. A compositionally biased stretch (polar residues) spans 552–573 (ERMQSVSPMDIMSLNSDSTLPV). Over residues 746–757 (PSQDAKITDNME) the composition is skewed to basic and acidic residues. Polar residues predominate over residues 773 to 789 (VELTSQKDTVLQKSQSF). Over residues 1105 to 1122 (INNFPDTSSARQTPTDTT) the composition is skewed to polar residues. Positions 1128–1137 (KKPELHKSEI) are enriched in basic and acidic residues. 2 WH2 domains span residues 1167 to 1187 (IHSSLMEAIQSGEGIERLRKV) and 1207 to 1227 (ERSALLSAIRASSTSAKLKKT). A disordered region spans residues 1246 to 1297 (NVHTEVISPRPTSPDFVPPLPPSFSPPPPPPPPLAPAKPPVVLPPGGNPEAA). Residues 1261-1292 (FVPPLPPSFSPPPPPPPPLAPAKPPVVLPPGG) show a composition bias toward pro residues. Residues 1297–1317 (AREALLEAIRSGSGAQQLRKV) form the WH2 3 domain.

As to quaternary structure, interacts with pacsin1.

It localises to the cell membrane. The protein resides in the cytoplasm. The protein localises to the cytoskeleton. It is found in the cell projection. Its subcellular location is the ruffle. It localises to the cytosol. Functionally, plays an important role in the reorganization of the actin cytoskeleton. Binds to and sequesters actin monomers (G actin). Nucleates actin polymerization by assembling three actin monomers in cross-filament orientation and thereby promotes growth of actin filaments at the barbed end. Can also mediate actin depolymerization at barbed ends and severing of actin filaments. Promotes formation of cell ruffles. Regulates neuron morphogenesis and increases branching of axons and dendrites. Required for normal embryonic development, including normal development of laterality, normal body size and shape, as well as normal brain, heart and kidney development. Required for normal development of stereocilia and kinocilia in sensory hair cells of neuromasts in the posterior lateral line organ, and thus also for balance keeping and normal swimming behavior. The sequence is that of Protein cordon-bleu (cobl) from Danio rerio (Zebrafish).